The primary structure comprises 489 residues: MDSLTIPPVDLRLLAPLLVVVTWATVLLLVDVFFIPDGRKKLTGYLAIGGLVVAGLVGLPLWGVTGTTFGGMLRLDPFALTLTWIFLLIGILSITMSLDYLPGQGIEQGEYYPLIMFAVSGMILLAQGTDLIVLFLGIETLSITLYILTGFAYPRLTSEEAAMKYLVLGAFAAGFFVYGIALIFGATGSTRLGEIGAYAASRGIGDLNLTLLLGGAAMVLIAFSFKVALAPFHMWTPDVYEGSPTPVAAFMSVGTKGGALAALVRLLFEGLPTLNEYWLPVLAGLTALTMVVGNLGAVAQTNVKRMLAYSSIGHAGYVMLGVMVAGEQRGPEAFLFYMLVYALSNLGAFAVLIALEHQGENAWRLDDFAGLYQRQPLLAVAMAIFMFSLAGVPPMAGFMAKFYALTAAWEGGLPWLALVGVVTSAIAAFFYLRVIIRMFMTEPEGEPTPTLNRGLTVDIALAAIGTIAIGLIPAPVFALVERSLVVLGG.

Helical transmembrane passes span 15 to 35, 44 to 64, 78 to 98, 106 to 126, 131 to 151, 166 to 186, 209 to 229, 244 to 264, 278 to 298, 306 to 326, 333 to 353, 378 to 398, 412 to 432, and 459 to 479; these read APLLVVVTWATVLLLVDVFFI, GYLAIGGLVVAGLVGLPLWGV, FALTLTWIFLLIGILSITMSL, IEQGEYYPLIMFAVSGMILLA, LIVLFLGIETLSITLYILTGF, LVLGAFAAGFFVYGIALIFGA, LTLLLGGAAMVLIAFSFKVAL, PTPVAAFMSVGTKGGALAALV, WLPVLAGLTALTMVVGNLGAV, MLAYSSIGHAGYVMLGVMVAG, AFLFYMLVYALSNLGAFAVLI, LAVAMAIFMFSLAGVPPMAGF, GLPWLALVGVVTSAIAAFFYL, and IALAAIGTIAIGLIPAPVFAL.

Belongs to the complex I subunit 2 family. NDH-1 is composed of 14 different subunits. Subunits NuoA, H, J, K, L, M, N constitute the membrane sector of the complex.

The protein resides in the cell membrane. The catalysed reaction is a quinone + NADH + 5 H(+)(in) = a quinol + NAD(+) + 4 H(+)(out). In terms of biological role, NDH-1 shuttles electrons from NADH, via FMN and iron-sulfur (Fe-S) centers, to quinones in the respiratory chain. The immediate electron acceptor for the enzyme in this species is believed to be ubiquinone. Couples the redox reaction to proton translocation (for every two electrons transferred, four hydrogen ions are translocated across the cytoplasmic membrane), and thus conserves the redox energy in a proton gradient. The protein is NADH-quinone oxidoreductase subunit N of Chloroflexus aggregans (strain MD-66 / DSM 9485).